Reading from the N-terminus, the 273-residue chain is Cell division cycle-associated protein 3 (273 aa).

Disordered stretches follow at residues 1–231 (MGST…ALSE) and 251–273 (GGGAWEQNEDHDKENQHFALMES). 2 positions are modified to phosphoserine: Ser29 and Ser31. The span at 32–45 (AGIQRTPIQVESSP) shows a compositional bias: polar residues. Position 37 is a phosphothreonine (Thr37). Residues Ser44 and Ser67 each carry the phosphoserine modification. Thr75 carries the post-translational modification Phosphothreonine. Positions 90–124 (KELSEVFETEVSETEVSESISSPVLGLPQETPLSS) are F-box-like. Ser93 carries the phosphoserine modification. Positions 94–105 (EVFETEVSETEV) are enriched in acidic residues. Composition is skewed to polar residues over residues 144–154 (PWSQTELNSKQ) and 164–175 (STETMVSGQTSD). Ser204 carries the post-translational modification Phosphoserine. Thr207 is subject to Phosphothreonine. A compositionally biased stretch (polar residues) spans 210–220 (QDDNSPGTLTL). Phosphoserine is present on Ser214. Thr217 bears the Phosphothreonine mark. The KEN box signature appears at 263–265 (KEN).

In terms of assembly, interacts with SKP1. Part of a SCF (SKP1-cullin-F-box) protein ligase complex. Post-translationally, ubiquitinated and degraded by the APC/C-Cdh1 complex.

Its subcellular location is the cytoplasm. The protein resides in the cytosol. It participates in protein modification; protein ubiquitination. Its function is as follows. F-box-like protein which is required for entry into mitosis. Acts by participating in E3 ligase complexes that mediate the ubiquitination and degradation of WEE1 kinase at G2/M phase. In Rattus norvegicus (Rat), this protein is Cell division cycle-associated protein 3 (Cdca3).